The following is a 128-amino-acid chain: Holin-like protein CidA (128 aa).

3 helical membrane-spanning segments follow: residues 23-43 (LIVE…IVIF), 58-78 (IGAL…AVGI), and 84-104 (ILAE…FVVM).

This sequence belongs to the CidA/LrgA family. CidA subfamily.

It localises to the cell membrane. In terms of biological role, increases the activity of extracellular murein hydrolases possibly by mediating their export via hole formation. Inhibited by the antiholin-like proteins LrgAB. In an unstressed cell, the LrgAB products probably inhibit the function of the CidA protein. When a cell is stressed by the addition of antibiotics or by other factors in the environment, CidA possibly oligomerizes within the bacterial cell membrane, creating lesions that disrupt the proton motive force, which in turn results in loss of cell viability. These lesions are also hypothesized to regulate the subsequent cell lysis by either allowing the murein hydrolases access to the cell wall substrate and/or regulating their activity by a possible change in the cell wall pH that results from loss of membrane potential. This chain is Holin-like protein CidA, found in Bacillus licheniformis (strain ATCC 14580 / DSM 13 / JCM 2505 / CCUG 7422 / NBRC 12200 / NCIMB 9375 / NCTC 10341 / NRRL NRS-1264 / Gibson 46).